The sequence spans 327 residues: Dolichyl-phosphate beta-glucosyltransferase (327 aa).

The Lumenal portion of the chain corresponds to 1 to 15 (MIDLFINIASFTIYG). Residues 16-36 (IPVIPLFIIVFVILSYYLLLL) traverse the membrane as a helical segment. Residues 37-327 (HDESPLWLEK…YLLGIWKIKS (291 aa)) lie on the Cytoplasmic side of the membrane.

It belongs to the glycosyltransferase 2 family.

Its subcellular location is the endoplasmic reticulum membrane. It carries out the reaction a di-trans,poly-cis-dolichyl phosphate + UDP-alpha-D-glucose = a di-trans,poly-cis-dolichyl beta-D-glucosyl phosphate + UDP. It participates in protein modification; protein glycosylation. Its function is as follows. Endoplasmic reticulum membrane-bound UDP-glucose:dolichyl-phosphate glucosyltransferase involved in protein N-linked glycosylation. This Dictyostelium discoideum (Social amoeba) protein is Dolichyl-phosphate beta-glucosyltransferase (alg5).